A 747-amino-acid chain; its full sequence is Tripartite terminase subunit 3 (747 aa).

The Nuclear localization signal motif lies at 194–198 (KRAKV). The Walker A motif signature appears at 267–274 (VPRRHGKT). Residues 361-366 (LLFVDE) carry the Walker B motif motif. Glutamate 366 functions as the For ATPase activity in the catalytic mechanism. Active-site for nuclease activity residues include aspartate 521, glutamate 593, and aspartate 722.

This sequence belongs to the herpesviridae TRM3 protein family. Interacts with the terminase subunits TRM1 and TRM2. Interacts with portal protein.

The protein localises to the host nucleus. Functionally, component of the molecular motor that translocates viral genomic DNA in empty capsid during DNA packaging. Forms a tripartite terminase complex together with TRM1 and TRM2 in the host cytoplasm. Once the complex reaches the host nucleus, it interacts with the capsid portal vertex. This portal forms a ring in which genomic DNA is translocated into the capsid. TRM3 carries an RNase H-like nuclease activity that plays an important role for the cleavage of concatemeric viral DNA into unit length genomes. The chain is Tripartite terminase subunit 3 from Homo sapiens (Human).